The chain runs to 421 residues: Phosphatidylinositol 5-phosphate 4-kinase type-2 gamma (421 aa).

A2 carries the post-translational modification N-acetylalanine. Phosphoserine is present on S26. One can recognise a PIPK domain in the interval 43–420 (AADPLVGVFL…RFLDFITNIF (378 aa)). The segment at 69 to 75 (VMLLPDD) is required for interaction with PIP5K1A. Residue S349 is modified to Phosphoserine.

Interacts with PIP5K1A; the interaction inhibits PIP5K1A kinase activity. In terms of processing, phosphorylated, phosphorylation is induced by EGF.

The protein localises to the endoplasmic reticulum. Its subcellular location is the cytoplasm. It catalyses the reaction a 1,2-diacyl-sn-glycero-3-phospho-(1D-myo-inositol-5-phosphate) + ATP = a 1,2-diacyl-sn-glycero-3-phospho-(1D-myo-inositol-4,5-bisphosphate) + ADP + H(+). The catalysed reaction is 1,2-dihexadecanoyl-sn-glycero-3-phospho-(1D-myo-inositol-5-phosphate) + ATP = 1,2-dihexadecanoyl-sn-glycero-3-phospho-(1D-myo-inositol-4,5-bisphosphate) + ADP + H(+). It carries out the reaction 1,2-dihexadecanoyl-sn-glycero-3-phospho-(1D-myo-inositol-5-phosphate) + GTP = 1,2-dihexadecanoyl-sn-glycero-3-phospho-(1D-myo-inositol-4,5-bisphosphate) + GDP + H(+). Functionally, phosphatidylinositol 5-phosphate 4-kinase with low enzymatic activity. May be a GTP sensor, has higher GTP-dependent kinase activity than ATP-dependent kinase activity. PIP4Ks negatively regulate insulin signaling through a catalytic-independent mechanism. They interact with PIP5Ks and suppress PIP5K-mediated PtdIns(4,5)P2 synthesis and insulin-dependent conversion to PtdIns(3,4,5)P3. The polypeptide is Phosphatidylinositol 5-phosphate 4-kinase type-2 gamma (Homo sapiens (Human)).